Here is a 167-residue protein sequence, read N- to C-terminus: Inclusion membrane protein G (167 aa).

Transmembrane regions (helical) follow at residues 33-57 (VVLALSLFAVFASGSLSILSAAVLF) and 63-88 (VLPYLLILTTALLGCVYAVIVLLRSL). The tract at residues 94–167 (SCKKRSPEEI…DNSRSRSRSF (74 aa)) is sufficient for interaction with human 14-3-3 beta protein. Positions 97–167 (KRSPEEIEGA…DNSRSRSRSF (71 aa)) are disordered. Low complexity predominate over residues 122-135 (ESASPQASPTSSTL). Positions 161–166 (RSRSRS) match the Phosphorylation-dependent binding motif motif. Phosphoserine is present on Ser-166.

In infected HeLa cells colocalizes with host 14-3-3 protein (YWHAB); phosphorylation of Ser-166 is probably required. Interacts with Pkn1. Phosphorylated, possibly at more than one position, in infected HeLa cells. Phosphorylated by chlamydial kinase Pnk1.

Its subcellular location is the secreted. The protein resides in the host vacuole. It localises to the host pathogen-containing vacuole. It is found in the host pathogen-containing vacuole membrane. Inclusion membrane protein probably involved in early modification events of the chlamydial inclusion. The sequence is that of Inclusion membrane protein G from Chlamydia trachomatis serovar L2 (strain ATCC VR-902B / DSM 19102 / 434/Bu).